A 301-amino-acid chain; its full sequence is MKIALLSRSRKLYSSRRLIEAAEERGHEIQVIDVLRAYMNITSHKPSIHYKGEELEGFDVVIPRIGASVTFYGASVLRQFEMMGVYPLNESVAITRSRDKLRSLQLLSRKGIGMPVTGYASKPDDIKDVIKMVGGAPLVVKLLEGTQGIGVVLAETQKAAESVIEGFMGVKANILVQEYIKEANGADIRCFVIGGKVVASMKRQAPNGEFRSNLHRGGSAEVIRITPEERSTAVSAAKIMGLNVAGVDLLRSNHGPVVMEVNSSPGLRGIETATGKDIAGMIIEYIEKSGKVGKTKTRGKG.

In terms of domain architecture, ATP-grasp spans 104–287; sequence LQLLSRKGIG…IAGMIIEYIE (184 aa). Residues lysine 141, 178-179, aspartate 187, and 211-213 contribute to the ATP site; these read EY and RSN. Positions 248, 260, and 262 each coordinate Mg(2+). Residues aspartate 248, glutamate 260, and asparagine 262 each coordinate Mn(2+).

It belongs to the RimK family. Mg(2+) is required as a cofactor. Requires Mn(2+) as cofactor.

This Methanococcoides burtonii (strain DSM 6242 / NBRC 107633 / OCM 468 / ACE-M) protein is Probable alpha-L-glutamate ligase.